Here is a 70-residue protein sequence, read N- to C-terminus: Putative defensin-like protein 280 (70 aa).

The first 23 residues, 1-23 (MASIKHFFLVFICVSVLLTSGLA), serve as a signal peptide directing secretion. Cystine bridges form between cysteine 30/cysteine 53, cysteine 39/cysteine 65, and cysteine 43/cysteine 67.

It belongs to the DEFL family.

The protein localises to the secreted. This is Putative defensin-like protein 280 from Arabidopsis thaliana (Mouse-ear cress).